Reading from the N-terminus, the 444-residue chain is ATP-dependent protease ATPase subunit HslU (444 aa).

ATP-binding positions include Val18, 60 to 65 (GVGKTE), Asp258, Glu323, and Arg395.

The protein belongs to the ClpX chaperone family. HslU subfamily. A double ring-shaped homohexamer of HslV is capped on each side by a ring-shaped HslU homohexamer. The assembly of the HslU/HslV complex is dependent on binding of ATP.

Its subcellular location is the cytoplasm. Functionally, ATPase subunit of a proteasome-like degradation complex; this subunit has chaperone activity. The binding of ATP and its subsequent hydrolysis by HslU are essential for unfolding of protein substrates subsequently hydrolyzed by HslV. HslU recognizes the N-terminal part of its protein substrates and unfolds these before they are guided to HslV for hydrolysis. This chain is ATP-dependent protease ATPase subunit HslU, found in Thioalkalivibrio sulfidiphilus (strain HL-EbGR7).